A 415-amino-acid chain; its full sequence is Thyroxine-binding globulin (415 aa).

The first 20 residues, 1-20 (MSPFLYLVLLVLGLHATIHC), serve as a signal peptide directing secretion. N-linked (GlcNAc...) asparagine glycosylation is found at Asn36, Asn99, Asn165, and Asn253. The thyroxine site is built by Asn293 and Arg398.

It belongs to the serpin family.

The protein localises to the secreted. In terms of biological role, major thyroid hormone transport protein in serum. This is Thyroxine-binding globulin (SERPINA7) from Pan troglodytes (Chimpanzee).